We begin with the raw amino-acid sequence, 523 residues long: 2-isopropylmalate synthase (523 aa).

One can recognise a Pyruvate carboxyltransferase domain in the interval 5 to 267 (VIIFDTTLRD…HTRINHQEIW (263 aa)). Mn(2+) is bound by residues aspartate 14, histidine 202, histidine 204, and asparagine 238. The tract at residues 392-523 (RLDYFSVQSG…QNKENNKETV (132 aa)) is regulatory domain.

The protein belongs to the alpha-IPM synthase/homocitrate synthase family. LeuA type 1 subfamily. As to quaternary structure, homodimer. Mn(2+) is required as a cofactor.

The protein resides in the cytoplasm. The catalysed reaction is 3-methyl-2-oxobutanoate + acetyl-CoA + H2O = (2S)-2-isopropylmalate + CoA + H(+). It participates in amino-acid biosynthesis; L-leucine biosynthesis; L-leucine from 3-methyl-2-oxobutanoate: step 1/4. Functionally, catalyzes the condensation of the acetyl group of acetyl-CoA with 3-methyl-2-oxobutanoate (2-ketoisovalerate) to form 3-carboxy-3-hydroxy-4-methylpentanoate (2-isopropylmalate). The sequence is that of 2-isopropylmalate synthase from Citrobacter koseri (strain ATCC BAA-895 / CDC 4225-83 / SGSC4696).